A 132-amino-acid polypeptide reads, in one-letter code: Phosphomevalonate dehydratase small subunit (132 aa).

Catalysis depends on S61, which acts as the Proton acceptor.

This sequence belongs to the AcnX type II small subunit family. Heterodimer composed of a large subunit (PMDh-L) and a small subunit (PMDh-S).

It catalyses the reaction (R)-5-phosphomevalonate = (2E)-3-methyl-5-phosphooxypent-2-enoate + H2O. The protein operates within isoprenoid biosynthesis; isopentenyl diphosphate biosynthesis via mevalonate pathway. Component of a hydro-lyase that catalyzes the dehydration of mevalonate 5-phosphate (MVA5P) to form trans-anhydromevalonate 5-phosphate (tAHMP). Involved in the archaeal mevalonate (MVA) pathway, which provides fundamental precursors for isoprenoid biosynthesis, such as isopentenyl diphosphate (IPP) and dimethylallyl diphosphate (DMAPP). The protein is Phosphomevalonate dehydratase small subunit of Archaeoglobus fulgidus (strain ATCC 49558 / DSM 4304 / JCM 9628 / NBRC 100126 / VC-16).